Reading from the N-terminus, the 228-residue chain is L-ribulose-5-phosphate 4-epimerase UlaF (228 aa).

Substrate is bound by residues 26–27 (GN), 43–44 (SG), and 72–73 (SS). Zn(2+) contacts are provided by Asp74, His93, and His95. Asp118 serves as the catalytic Proton donor/acceptor. His167 serves as a coordination point for Zn(2+). Tyr225 serves as the catalytic Proton donor/acceptor.

It belongs to the aldolase class II family. AraD/FucA subfamily. It depends on Zn(2+) as a cofactor.

It carries out the reaction L-ribulose 5-phosphate = D-xylulose 5-phosphate. It functions in the pathway cofactor degradation; L-ascorbate degradation; D-xylulose 5-phosphate from L-ascorbate: step 4/4. Catalyzes the isomerization of L-ribulose 5-phosphate to D-xylulose 5-phosphate. Is involved in the anaerobic L-ascorbate utilization. The polypeptide is L-ribulose-5-phosphate 4-epimerase UlaF (Escherichia coli (strain K12 / MC4100 / BW2952)).